The sequence spans 101 residues: MDKSKRPFRKSKRSFRKRLPPIGSGDRIDYRNMSLISRFISEQGKILSRRVNRLTLKQQRLITTAIKQARILSSLPFLNNEKQLERTESIPRTTGTRIRNK.

Over residues 1 to 19 the composition is skewed to basic residues; it reads MDKSKRPFRKSKRSFRKRL. The segment at 1–23 is disordered; the sequence is MDKSKRPFRKSKRSFRKRLPPIG.

Belongs to the bacterial ribosomal protein bS18 family. Part of the 30S ribosomal subunit.

It is found in the plastid. It localises to the chloroplast. This is Small ribosomal subunit protein bS18c from Chloranthus spicatus (Chulantree).